The sequence spans 181 residues: Lipoprotein signal peptidase (181 aa).

3 helical membrane passes run 25-45 (LFYK…QVFI), 86-106 (LVYF…VFMV), and 107-127 (KYSY…NFFD). Active-site residues include aspartate 138 and aspartate 153. A helical transmembrane segment spans residues 149-169 (FNFADCCITFGFIGLFFCFLI).

It belongs to the peptidase A8 family.

It is found in the cell membrane. It catalyses the reaction Release of signal peptides from bacterial membrane prolipoproteins. Hydrolyzes -Xaa-Yaa-Zaa-|-(S,diacylglyceryl)Cys-, in which Xaa is hydrophobic (preferably Leu), and Yaa (Ala or Ser) and Zaa (Gly or Ala) have small, neutral side chains.. Its pathway is protein modification; lipoprotein biosynthesis (signal peptide cleavage). In terms of biological role, this protein specifically catalyzes the removal of signal peptides from prolipoproteins. This chain is Lipoprotein signal peptidase, found in Mycoplasma genitalium (strain ATCC 33530 / DSM 19775 / NCTC 10195 / G37) (Mycoplasmoides genitalium).